We begin with the raw amino-acid sequence, 274 residues long: tRNA-cytidine(32) 2-sulfurtransferase (274 aa).

Positions 40 to 45 match the PP-loop motif motif; sequence SGGKDS. Positions 115, 118, and 206 each coordinate [4Fe-4S] cluster.

This sequence belongs to the TtcA family. In terms of assembly, homodimer. Requires Mg(2+) as cofactor. [4Fe-4S] cluster is required as a cofactor.

It localises to the cytoplasm. It carries out the reaction cytidine(32) in tRNA + S-sulfanyl-L-cysteinyl-[cysteine desulfurase] + AH2 + ATP = 2-thiocytidine(32) in tRNA + L-cysteinyl-[cysteine desulfurase] + A + AMP + diphosphate + H(+). It functions in the pathway tRNA modification. Its function is as follows. Catalyzes the ATP-dependent 2-thiolation of cytidine in position 32 of tRNA, to form 2-thiocytidine (s(2)C32). The sulfur atoms are provided by the cysteine/cysteine desulfurase (IscS) system. This is tRNA-cytidine(32) 2-sulfurtransferase from Pseudomonas syringae pv. tomato (strain ATCC BAA-871 / DC3000).